The chain runs to 80 residues: Small membrane A-kinase anchor protein (80 aa).

Gly-2 carries N-myristoyl glycine lipidation.

The protein belongs to the small membrane AKAP family. Post-translationally, may be palmitoylated at Cys-3.

The protein resides in the cell membrane. Functionally, binds to type I regulatory subunits of protein kinase A and may anchor/target them to the plasma membrane. This is Small membrane A-kinase anchor protein from Tetraodon nigroviridis (Spotted green pufferfish).